A 203-amino-acid polypeptide reads, in one-letter code: Small ribosomal subunit protein uS4 (203 aa).

The 81-residue stretch at 93 to 173 (RRFDNVVFRA…IPSWIQVDKA (81 aa)) folds into the S4 RNA-binding domain.

Belongs to the universal ribosomal protein uS4 family. In terms of assembly, part of the 30S ribosomal subunit. Contacts protein S5. The interaction surface between S4 and S5 is involved in control of translational fidelity.

Its function is as follows. One of the primary rRNA binding proteins, it binds directly to 16S rRNA where it nucleates assembly of the body of the 30S subunit. With S5 and S12 plays an important role in translational accuracy. The sequence is that of Small ribosomal subunit protein uS4 from Pelodictyon phaeoclathratiforme (strain DSM 5477 / BU-1).